The primary structure comprises 380 residues: Actinidain (380 aa).

The signal sequence occupies residues 1 to 24 (MGLPKSFVSMSLLFFSTLLILSLA). A propeptide spans 25–126 (FNAKNLTQRT…NQYEPRVGQV (102 aa)) (activation peptide). Cystine bridges form between Cys-148–Cys-191, Cys-182–Cys-224, and Cys-282–Cys-332. The active site involves Cys-151. E64 is bound at residue Cys-151. Residues His-288 and Asn-308 contribute to the active site.

Belongs to the peptidase C1 family. Fruit.

It catalyses the reaction Specificity close to that of papain.. Repressed by the active-site-directed cysteine protease inhibitor E64 (L-trans-epoxysuccinyl-leucylamide-(4-guanido)-butane) produced by Aspergillus japonicus. In terms of biological role, cysteine protease responsible for the cleavage of kiwellin into kissper and KiTH. The chain is Actinidain from Actinidia chinensis var. chinensis (Chinese soft-hair kiwi).